A 452-amino-acid chain; its full sequence is COP9 signalosome complex subunit 11 (452 aa).

Residues 205-374 (FYIEDPKTMM…ISYSKRSIVD (170 aa)) form the PCI domain.

Component of a COP9 signalosome-like (CSN) complex.

The protein localises to the cytoplasm. Its subcellular location is the nucleus. Functionally, component of the COP9 signalosome (CSN) complex that acts as an regulator of the ubiquitin (Ubl) conjugation pathway by mediating the deneddylation of the cullin subunit of SCF-type E3 ubiquitin-protein ligase complexes The CSN complex is involved in the regulation of the mating pheromone response. PCI8 may also be involved in transcriptional and translational control. The protein is COP9 signalosome complex subunit 11 (PCI8) of Candida glabrata (strain ATCC 2001 / BCRC 20586 / JCM 3761 / NBRC 0622 / NRRL Y-65 / CBS 138) (Yeast).